A 79-amino-acid chain; its full sequence is MATKKEEVKFEDNLAELENIVRKLESGDVALEDAIAEFQKGMKISETLKKTLNEAEQTLVQIVGKDDNESEFSAEQKEY.

The protein belongs to the XseB family. As to quaternary structure, heterooligomer composed of large and small subunits.

Its subcellular location is the cytoplasm. The enzyme catalyses Exonucleolytic cleavage in either 5'- to 3'- or 3'- to 5'-direction to yield nucleoside 5'-phosphates.. Functionally, bidirectionally degrades single-stranded DNA into large acid-insoluble oligonucleotides, which are then degraded further into small acid-soluble oligonucleotides. In Lactococcus lactis subsp. cremoris (strain SK11), this protein is Exodeoxyribonuclease 7 small subunit.